The sequence spans 276 residues: Krueppel homolog 2 (276 aa).

The segment at 1–37 (MSAPTDQPPRSEGAQTNSSERSSQQQEQPQQSQSQNV) is disordered. A compositionally biased stretch (low complexity) spans 18 to 35 (SSERSSQQQEQPQQSQSQ). S22 carries the post-translational modification Phosphoserine. 3 consecutive transmembrane segments (helical) span residues 53–73 (ALWA…LPIF), 125–145 (LIFF…LYSV), and 181–201 (ILKA…VLAF).

The protein belongs to the PER33/POM33 family.

The protein resides in the membrane. Its function is as follows. Member of the dosage-dependent hierarchy effective upon white gene expression. The sequence is that of Krueppel homolog 2 (Kr-h2) from Drosophila melanogaster (Fruit fly).